A 290-amino-acid chain; its full sequence is 4-diphosphocytidyl-2-C-methyl-D-erythritol kinase (290 aa).

Residue lysine 10 is part of the active site. 95–105 (PVAAGLAGGSS) contributes to the ATP binding site. Aspartate 137 is an active-site residue.

The protein belongs to the GHMP kinase family. IspE subfamily.

The enzyme catalyses 4-CDP-2-C-methyl-D-erythritol + ATP = 4-CDP-2-C-methyl-D-erythritol 2-phosphate + ADP + H(+). It functions in the pathway isoprenoid biosynthesis; isopentenyl diphosphate biosynthesis via DXP pathway; isopentenyl diphosphate from 1-deoxy-D-xylulose 5-phosphate: step 3/6. In terms of biological role, catalyzes the phosphorylation of the position 2 hydroxy group of 4-diphosphocytidyl-2C-methyl-D-erythritol. This Geobacillus thermodenitrificans (strain NG80-2) protein is 4-diphosphocytidyl-2-C-methyl-D-erythritol kinase.